The sequence spans 103 residues: MTYVLDTNVVSALRVPGRHPAVAAWADSVQVAEQFVVAITLAEIERGVIAKERTDPTQSEHLRRWFDDKVLRIFVFARRGTNLIMQPLAGHIGYSLYSGISWF.

The PINc domain occupies 3-74 (YVLDTNVVSA…WFDDKVLRIF (72 aa)). Asp-6 is a binding site for Mg(2+).

The protein belongs to the PINc/VapC protein family. Requires Mg(2+) as cofactor.

Functionally, toxic component of a type II toxin-antitoxin (TA) system. An RNase. The cognate antitoxin is VapB14. The polypeptide is Ribonuclease VapC14 (vapC14) (Mycobacterium tuberculosis (strain CDC 1551 / Oshkosh)).